The following is a 325-amino-acid chain: Pseudouridylate synthase TRUB2, mitochondrial (325 aa).

The active-site Nucleophile is the aspartate 101. The segment at 292–325 (QTEGVSRGNPDREAAEGPIPGPSRGAEGEGELRA) is disordered.

The protein belongs to the pseudouridine synthase TruB family.

It localises to the mitochondrion matrix. The enzyme catalyses a uridine in mRNA = a pseudouridine in mRNA. It carries out the reaction uridine(55) in tRNA = pseudouridine(55) in tRNA. Functionally, minor enzyme contributing to the isomerization of uridine to pseudouridine (pseudouridylation) of specific mitochondrial mRNAs (mt-mRNAs) such as COXI and COXIII mt-mRNAs, modulating the efficiency of mitochondrial protein synthesis without changes in transcript abundance or stability. Also catalyzes pseudouridylation of some tRNAs, including synthesis of pseudouridine(55) from uracil-55, in the psi GC loop of a subset of tRNAs. In Xenopus tropicalis (Western clawed frog), this protein is Pseudouridylate synthase TRUB2, mitochondrial.